The following is a 159-amino-acid chain: Phosphopantetheine adenylyltransferase (159 aa).

S8 contributes to the substrate binding site. ATP-binding positions include 8–9 (SF) and H16. Residues K40, T72, and R86 each contribute to the substrate site. ATP-binding positions include 87-89 (GLR), E97, and 122-128 (HSFVSSS).

The protein belongs to the bacterial CoaD family. In terms of assembly, homohexamer. It depends on Mg(2+) as a cofactor.

Its subcellular location is the cytoplasm. The enzyme catalyses (R)-4'-phosphopantetheine + ATP + H(+) = 3'-dephospho-CoA + diphosphate. It functions in the pathway cofactor biosynthesis; coenzyme A biosynthesis; CoA from (R)-pantothenate: step 4/5. In terms of biological role, reversibly transfers an adenylyl group from ATP to 4'-phosphopantetheine, yielding dephospho-CoA (dPCoA) and pyrophosphate. The protein is Phosphopantetheine adenylyltransferase of Synechococcus sp. (strain JA-3-3Ab) (Cyanobacteria bacterium Yellowstone A-Prime).